A 377-amino-acid chain; its full sequence is tRNA-specific 2-thiouridylase MnmA (377 aa).

Residues 12 to 19 and methionine 38 each bind ATP; that span reads GMSGGVDS. Residues 98-100 are interaction with target base in tRNA; sequence NPD. Cysteine 103 functions as the Nucleophile in the catalytic mechanism. Residues cysteine 103 and cysteine 200 are joined by a disulfide bond. An ATP-binding site is contributed by glycine 127. Residues 150-152 form an interaction with tRNA region; the sequence is KDQ. The Cysteine persulfide intermediate role is filled by cysteine 200. The interaction with tRNA stretch occupies residues 314 to 315; the sequence is RY.

This sequence belongs to the MnmA/TRMU family.

The protein resides in the cytoplasm. The catalysed reaction is S-sulfanyl-L-cysteinyl-[protein] + uridine(34) in tRNA + AH2 + ATP = 2-thiouridine(34) in tRNA + L-cysteinyl-[protein] + A + AMP + diphosphate + H(+). Its function is as follows. Catalyzes the 2-thiolation of uridine at the wobble position (U34) of tRNA, leading to the formation of s(2)U34. The sequence is that of tRNA-specific 2-thiouridylase MnmA from Limosilactobacillus fermentum (strain NBRC 3956 / LMG 18251) (Lactobacillus fermentum).